The following is a 1761-amino-acid chain: Probable serine/threonine-protein kinase DDB_G0282963 (1761 aa).

12 disordered regions span residues 18–47 (PQQQQIPQQQEQQQQQQQQQQQQQQQQQQQ), 60–269 (QQQQ…SNKL), 322–458 (SISN…SDFN), 545–717 (QNSS…KSSQ), 749–783 (LKNSPFPPSSPILSPQTDDPNNNNNNNNSNTTISQ), 798–830 (AFYNSGSNNNNNNNNNNNNNNNNNNNNTNSTSA), 842–956 (TTQI…KSVF), 972–997 (NSHHHHNSGNNSSNSNNNNNDDEVPT), 1081–1151 (ITSA…CNVN), 1179–1305 (KNNC…PSKQ), 1318–1343 (ALDSTNNNNNNNNDTDSTSSNMGTPT), and 1355–1459 (QHSR…ECWK). 4 stretches are compositionally biased toward low complexity: residues 19–47 (QQQQIPQQQEQQQQQQQQQQQQQQQQQQQ), 60–85 (QQQQEQQNNNNNINDNINGNNNSNEI), 92–105 (NITNNNGTSIIISL), and 112–237 (ALNS…NNNN). The span at 238-256 (KQMTPPTFKNNLQVKHQPQ) shows a compositional bias: polar residues. 4 stretches are compositionally biased toward low complexity: residues 257–269 (SSSGGSIGGSNKL), 322–341 (SISNTTNETTTTTTTTTNTT), 348–451 (GSIG…NNGV), and 546–572 (NSSLNINNNNNSSNNNNINNNNNNNNI). Polar residues predominate over residues 573-582 (MAGSTSSVIY). Residues 591 to 627 (NENNNNNINNDNTVCNINNNNNSNNNKSNNSNNSNNS) show a composition bias toward low complexity. The span at 633–643 (SSDEEPETDSD) shows a compositional bias: acidic residues. 8 stretches are compositionally biased toward low complexity: residues 674 to 697 (NNTNTNTNTHNTYNNNKNNNNNNT), 759 to 778 (PILSPQTDDPNNNNNNNNSN), 805 to 824 (NNNNNNNNNNNNNNNNNNNN), 847 to 885 (TSDIDTSNSDNNNNNNNNNTSDNNFNDYNNDYNNDYNNY), 902 to 956 (TKMS…KSVF), 979 to 990 (SGNNSSNSNNNN), 1081 to 1149 (ITSA…CTCN), and 1180 to 1262 (NNCT…SNNN). Over residues 1263-1273 (NHHHHHHHHHN) the composition is skewed to basic residues. 4 stretches are compositionally biased toward low complexity: residues 1288-1303 (SSSSSPWSSPALSSPS), 1320-1338 (DSTNNNNNNNNDTDSTSSN), 1359-1386 (NNSSNNQNNNNINNNNNNNNNNNNNNNN), and 1393-1454 (SNST…MNSN). Residues 1476–1744 (LFLIKKIGAG…AITSLYDDYI (269 aa)) enclose the Protein kinase domain. Residues 1482-1490 (IGAGSFSKV) and Lys1503 contribute to the ATP site. The Proton acceptor role is filled by Asp1597.

Belongs to the protein kinase superfamily. TKL Ser/Thr protein kinase family.

It carries out the reaction L-seryl-[protein] + ATP = O-phospho-L-seryl-[protein] + ADP + H(+). The enzyme catalyses L-threonyl-[protein] + ATP = O-phospho-L-threonyl-[protein] + ADP + H(+). In Dictyostelium discoideum (Social amoeba), this protein is Probable serine/threonine-protein kinase DDB_G0282963.